A 678-amino-acid polypeptide reads, in one-letter code: UvrABC system protein B (678 aa).

The Helicase ATP-binding domain maps to 31 to 417; sequence ENLNDGLAHQ…KSGTEIIDQV (387 aa). 44–51 serves as a coordination point for ATP; sequence GVTGSGKT. Residues 97–120 carry the Beta-hairpin motif; the sequence is YYDYYQPEAYVPSSDTFIEKDASI. A Helicase C-terminal domain is found at 436 to 602; sequence QVDDLLSEAR…GLNKKVGELL (167 aa). Residues 603–625 form a disordered region; that stretch reads DIGQGGSNKSRNKPRSQKAAEPA. One can recognise a UVR domain in the interval 638–673; sequence QQQIKKLEQQMYKFAQDLEFEKAAAIRDQLHKLREQ.

It belongs to the UvrB family. As to quaternary structure, forms a heterotetramer with UvrA during the search for lesions. Interacts with UvrC in an incision complex.

Its subcellular location is the cytoplasm. The UvrABC repair system catalyzes the recognition and processing of DNA lesions. A damage recognition complex composed of 2 UvrA and 2 UvrB subunits scans DNA for abnormalities. Upon binding of the UvrA(2)B(2) complex to a putative damaged site, the DNA wraps around one UvrB monomer. DNA wrap is dependent on ATP binding by UvrB and probably causes local melting of the DNA helix, facilitating insertion of UvrB beta-hairpin between the DNA strands. Then UvrB probes one DNA strand for the presence of a lesion. If a lesion is found the UvrA subunits dissociate and the UvrB-DNA preincision complex is formed. This complex is subsequently bound by UvrC and the second UvrB is released. If no lesion is found, the DNA wraps around the other UvrB subunit that will check the other stand for damage. This chain is UvrABC system protein B, found in Mannheimia succiniciproducens (strain KCTC 0769BP / MBEL55E).